An 822-amino-acid chain; its full sequence is Fibroblast growth factor receptor 4 (822 aa).

Positions M1–A35 are cleaved as a signal peptide. Residues N13, N72, and N125 are each glycosylated (N-linked (GlcNAc...) asparagine). Over R36–D388 the chain is Extracellular. 3 consecutive Ig-like C2-type domains span residues P39 to S129, P157 to D259, and P268 to T368. C69 and C114 form a disulfide bridge. The segment at S136–P166 is disordered. C191 and C243 are disulfide-bonded. N-linked (GlcNAc...) asparagine glycans are attached at residues N240, N277, N309, N330, and N341. Cysteines 290 and 352 form a disulfide. Residues I389–C409 form a helical membrane-spanning segment. Topologically, residues R410 to T822 are cytoplasmic. Residues L486–L774 enclose the Protein kinase domain. Residues L492–V500 and K522 contribute to the ATP site. The active-site Proton acceptor is D631. A phosphotyrosine; by autocatalysis mark is found at Y661, Y662, and Y773.

The protein belongs to the protein kinase superfamily. Tyr protein kinase family. Fibroblast growth factor receptor subfamily. Ubiquitinated. Subject to proteasomal degradation when not fully glycosylated. In terms of processing, autophosphorylated. Binding of FGF family members together with heparan sulfate proteoglycan or heparin promotes receptor dimerization and autophosphorylation on tyrosine residues. Autophosphorylation occurs in trans between the two FGFR molecules present in the dimer.

Its subcellular location is the cell membrane. The protein localises to the endosome. It is found in the endoplasmic reticulum. The enzyme catalyses L-tyrosyl-[protein] + ATP = O-phospho-L-tyrosyl-[protein] + ADP + H(+). With respect to regulation, present in an inactive conformation in the absence of bound ligand. Ligand binding leads to dimerization and activation by autophosphorylation on tyrosine residues. In terms of biological role, tyrosine-protein kinase that acts as a cell-surface receptor for fibroblast growth factors and plays a role in the regulation of cell proliferation, differentiation and migration, and in regulation of lipid metabolism, bile acid biosynthesis, glucose uptake, vitamin D metabolism and phosphate homeostasis. Required for normal down-regulation of the expression of CYP7A1, the rate-limiting enzyme in bile acid synthesis, in response to FGF19. Phosphorylates PLCG1 and FRS2. Ligand binding leads to the activation of several signaling cascades. Activation of PLCG1 leads to the production of the cellular signaling molecules diacylglycerol and inositol 1,4,5-trisphosphate. Phosphorylation of FRS2 triggers recruitment of GRB2, GAB1, PIK3R1 and SOS1, and mediates activation of RAS, MAPK1/ERK2, MAPK3/ERK1 and the MAP kinase signaling pathway, as well as of the AKT1 signaling pathway. This chain is Fibroblast growth factor receptor 4 (FGFR4), found in Pleurodeles waltl (Iberian ribbed newt).